A 184-amino-acid chain; its full sequence is ATP synthase subunit b, chloroplastic (184 aa).

A helical membrane pass occupies residues 31 to 53 (LINLGIVISLLIYFGKGVLSNLL).

Belongs to the ATPase B chain family. As to quaternary structure, F-type ATPases have 2 components, F(1) - the catalytic core - and F(0) - the membrane proton channel. F(1) has five subunits: alpha(3), beta(3), gamma(1), delta(1), epsilon(1). F(0) has four main subunits: a(1), b(1), b'(1) and c(10-14). The alpha and beta chains form an alternating ring which encloses part of the gamma chain. F(1) is attached to F(0) by a central stalk formed by the gamma and epsilon chains, while a peripheral stalk is formed by the delta, b and b' chains.

It localises to the plastid. Its subcellular location is the chloroplast thylakoid membrane. F(1)F(0) ATP synthase produces ATP from ADP in the presence of a proton or sodium gradient. F-type ATPases consist of two structural domains, F(1) containing the extramembraneous catalytic core and F(0) containing the membrane proton channel, linked together by a central stalk and a peripheral stalk. During catalysis, ATP synthesis in the catalytic domain of F(1) is coupled via a rotary mechanism of the central stalk subunits to proton translocation. Its function is as follows. Component of the F(0) channel, it forms part of the peripheral stalk, linking F(1) to F(0). In Aneura mirabilis (Parasitic liverwort), this protein is ATP synthase subunit b, chloroplastic.